A 275-amino-acid chain; its full sequence is Digeranylgeranylglyceryl phosphate synthase (275 aa).

A run of 8 helical transmembrane segments spans residues 12-32, 35-55, 88-108, 125-145, 146-166, 200-220, 224-244, and 255-275; these read VHNV…ATTW, TPLF…GYVI, IVLF…PFGF, KLGL…AYYG, GLAS…IFFF, WIIA…PYFL, VIYL…LILH, and SLMK…SLRI.

It belongs to the UbiA prenyltransferase family. DGGGP synthase subfamily. Requires Mg(2+) as cofactor.

Its subcellular location is the cell membrane. The enzyme catalyses sn-3-O-(geranylgeranyl)glycerol 1-phosphate + (2E,6E,10E)-geranylgeranyl diphosphate = 2,3-bis-O-(geranylgeranyl)-sn-glycerol 1-phosphate + diphosphate. The protein operates within membrane lipid metabolism; glycerophospholipid metabolism. In terms of biological role, prenyltransferase that catalyzes the transfer of the geranylgeranyl moiety of geranylgeranyl diphosphate (GGPP) to the C2 hydroxyl of (S)-3-O-geranylgeranylglyceryl phosphate (GGGP). This reaction is the second ether-bond-formation step in the biosynthesis of archaeal membrane lipids. This is Digeranylgeranylglyceryl phosphate synthase from Sulfolobus acidocaldarius (strain ATCC 33909 / DSM 639 / JCM 8929 / NBRC 15157 / NCIMB 11770).